A 495-amino-acid polypeptide reads, in one-letter code: DUF21 domain-containing protein At4g14230 (495 aa).

Over 1–42 (MHPINAVVAARMLAGISQSNALQSEAIPFGSLEWITYAGISC) the chain is Extracellular. A CNNM transmembrane domain is found at 30-212 (GSLEWITYAG…GKGGELTHDE (183 aa)). A helical transmembrane segment spans residues 43 to 63 (FLVLFAGIMSGLTLGLMSLGL). At 64–92 (VELEILQRSGTPKEKKQSAAIFPVVQKQH) the chain is on the cytoplasmic side. Residues 93–113 (QLLVTLLLFNALAMEGLPIYL) traverse the membrane as a helical segment. At 114-120 (DKIFNEY) the chain is on the extracellular side. Residues 121–141 (VAIILSVTFVLFVGEVIPQAI) traverse the membrane as a helical segment. Residues 142-146 (CTRYG) lie on the Cytoplasmic side of the membrane. A helical membrane pass occupies residues 147 to 167 (LAVGANLVWLVRILMVLSYPI). Topologically, residues 168 to 495 (SFPIAKMLDW…TMTGPPQGNN (328 aa)) are extracellular. CBS domains are found at residues 231-291 (MTPI…TGTL), 296-356 (GIRR…NNSE), and 357-426 (LTAP…IVDE). Positions 330-354 (KGKSKGHPSTLHEENSGESNVSSNN) are disordered. Asn349 carries N-linked (GlcNAc...) asparagine glycosylation. A Phosphoserine modification is found at Ser352. Asn353 is a glycosylation site (N-linked (GlcNAc...) asparagine). A disordered region spans residues 455 to 495 (SGRRLLGPKGSGGPKTPKASSTPKPDDKLMGTMTGPPQGNN). Residues 456 to 477 (GRRLLGPKGSGGPKTPKASSTP) are compositionally biased toward low complexity.

It is found in the membrane. The chain is DUF21 domain-containing protein At4g14230 (CBSDUF2) from Arabidopsis thaliana (Mouse-ear cress).